The primary structure comprises 770 residues: Probable methyltransferase PMT24 (770 aa).

Residues 1 to 17 (MAMGKYSRVDGKKSSGY) lie on the Cytoplasmic side of the membrane. A helical; Signal-anchor for type II membrane protein membrane pass occupies residues 18-38 (GLTITIVLIVSLCLVGAWMFM). Topologically, residues 39 to 770 (SSWSAPTESI…EAETIQSAIA (732 aa)) are lumenal. Composition is skewed to basic and acidic residues over residues 54-81 (ERTK…FPDE) and 93-164 (NEEK…KSED). Residues 54 to 223 (ERTKDVDTTK…STGSGAWSTQ (170 aa)) are disordered. Asn160 and Asn166 each carry an N-linked (GlcNAc...) asparagine glycan. Polar residues predominate over residues 212-223 (ESSTGSGAWSTQ). 2 N-linked (GlcNAc...) asparagine glycosylation sites follow: Asn244 and Asn363.

The protein belongs to the methyltransferase superfamily.

The protein localises to the golgi apparatus membrane. The chain is Probable methyltransferase PMT24 from Arabidopsis thaliana (Mouse-ear cress).